The chain runs to 120 residues: Seripauperin-8 (120 aa).

The N-terminal stretch at 1 to 20 is a signal peptide; that stretch reads MVKLTSIAAGVAAIAATASA.

This sequence belongs to the SRP1/TIP1 family. Seripauperin subfamily.

The chain is Seripauperin-8 (PAU8) from Saccharomyces cerevisiae (strain ATCC 204508 / S288c) (Baker's yeast).